We begin with the raw amino-acid sequence, 253 residues long: Ubiquinone/menaquinone biosynthesis C-methyltransferase UbiE (253 aa).

S-adenosyl-L-methionine-binding positions include Thr-76, Asp-97, and Asp-125–Ala-126.

Belongs to the class I-like SAM-binding methyltransferase superfamily. MenG/UbiE family.

It catalyses the reaction a 2-demethylmenaquinol + S-adenosyl-L-methionine = a menaquinol + S-adenosyl-L-homocysteine + H(+). It carries out the reaction a 2-methoxy-6-(all-trans-polyprenyl)benzene-1,4-diol + S-adenosyl-L-methionine = a 5-methoxy-2-methyl-3-(all-trans-polyprenyl)benzene-1,4-diol + S-adenosyl-L-homocysteine + H(+). Its pathway is quinol/quinone metabolism; menaquinone biosynthesis; menaquinol from 1,4-dihydroxy-2-naphthoate: step 2/2. It functions in the pathway cofactor biosynthesis; ubiquinone biosynthesis. Methyltransferase required for the conversion of demethylmenaquinol (DMKH2) to menaquinol (MKH2) and the conversion of 2-polyprenyl-6-methoxy-1,4-benzoquinol (DDMQH2) to 2-polyprenyl-3-methyl-6-methoxy-1,4-benzoquinol (DMQH2). The sequence is that of Ubiquinone/menaquinone biosynthesis C-methyltransferase UbiE from Azotobacter vinelandii (strain DJ / ATCC BAA-1303).